A 589-amino-acid chain; its full sequence is Zinc finger and BTB domain-containing protein 46 (589 aa).

Residues 31-99 enclose the BTB domain; sequence CDVCVVVEGK…MYSAHLALTS (69 aa). Positions 173–330 are disordered; that stretch reads RRTSPANSSG…ASSSDSRGER (158 aa). A compositionally biased stretch (basic and acidic residues) spans 197–207; it reads GKEDQEPKADG. Residue lysine 229 forms a Glycyl lysine isopeptide (Lys-Gly) (interchain with G-Cter in SUMO2) linkage. At serine 234 the chain carries Phosphoserine. Residues 305 to 325 are compositionally biased toward polar residues; that stretch reads WPFSSRDSNADLSVTEASSSD. 2 consecutive C2H2-type zinc fingers follow at residues 418–436 and 446–468; these read FKCP…LKRH and YPCE…TLVH. Residues 512–589 are disordered; that stretch reads PLDHGGGGGE…GPDKDFAWLS (78 aa). Over residues 546 to 570 the composition is skewed to acidic residues; the sequence is EELGEDDEGLAPEDALLADDKDEED.

Sumoylated. Desumoylation by DESI1 reverses transcriptional repression activity.

Its subcellular location is the nucleus. Its function is as follows. Functions as a transcriptional repressor for PRDM1. This is Zinc finger and BTB domain-containing protein 46 (ZBTB46) from Homo sapiens (Human).